The sequence spans 348 residues: tRNA N6-adenosine threonylcarbamoyltransferase (348 aa).

Residues His115 and His119 each coordinate Fe cation. Substrate-binding positions include 138–142 (LVSGG), Asp171, Gly184, and Asn278. Asp306 is a binding site for Fe cation.

This sequence belongs to the KAE1 / TsaD family. Requires Fe(2+) as cofactor.

Its subcellular location is the cytoplasm. The catalysed reaction is L-threonylcarbamoyladenylate + adenosine(37) in tRNA = N(6)-L-threonylcarbamoyladenosine(37) in tRNA + AMP + H(+). Required for the formation of a threonylcarbamoyl group on adenosine at position 37 (t(6)A37) in tRNAs that read codons beginning with adenine. Is involved in the transfer of the threonylcarbamoyl moiety of threonylcarbamoyl-AMP (TC-AMP) to the N6 group of A37, together with TsaE and TsaB. TsaD likely plays a direct catalytic role in this reaction. In Methylibium petroleiphilum (strain ATCC BAA-1232 / LMG 22953 / PM1), this protein is tRNA N6-adenosine threonylcarbamoyltransferase.